A 481-amino-acid polypeptide reads, in one-letter code: Zinc metalloproteinase/disintegrin (481 aa).

The N-terminal stretch at 1–20 (MIQVLLVTICLAVFPYQGSS) is a signal peptide. A propeptide spanning residues 21–190 (IILESGNVDD…KASQLYLTPE (170 aa)) is cleaved from the precursor. One can recognise a Peptidase M12B domain in the interval 197–392 (RYIKLAIVVD…DNPQCILNAP (196 aa)). Intrachain disulfides connect C308/C387, C349/C371, and C351/C354. H333 lines the Zn(2+) pocket. The active site involves E334. Zn(2+) is bound by residues H337 and H343. The propeptide occupies 393-408 (LRTDTVSTPVSGNEFL). The Disintegrin domain maps to 400 to 481 (TPVSGNEFLE…GDCPRNPFHA (82 aa)). 6 disulfides stabilise this stretch: C414/C429, C416/C424, C423/C446, C437/C443, C442/C467, and C455/C474. The Cell attachment site motif lies at 459-461 (RGD).

The protein belongs to the venom metalloproteinase (M12B) family. P-II subfamily. P-IIa sub-subfamily. In terms of assembly, monomer. Zn(2+) serves as cofactor. Expressed by the venom gland.

It is found in the secreted. In terms of biological role, impairs hemostasis in the envenomed animal. Disintegrin elegantin-2a-f: inhibits platelet aggregation induced by ADP, thrombin, platelet-activating factor and collagen. Acts by inhibiting fibrinogen interaction with platelet receptors GPIIb/GPIIIa (ITGA2B/ITGB3). The sequence is that of Zinc metalloproteinase/disintegrin from Protobothrops elegans (Elegant pitviper).